The primary structure comprises 311 residues: Olfactory receptor 10G7 (311 aa).

Residues 1–23 (MSNATLLTAFILTGLPHAPGLDA) lie on the Extracellular side of the membrane. N-linked (GlcNAc...) asparagine glycosylation occurs at Asn-3. A helical transmembrane segment spans residues 24-44 (PLFGIFLVVYVLTVLGNLLIL). Topologically, residues 45 to 52 (LVIRVDSH) are cytoplasmic. A helical membrane pass occupies residues 53 to 73 (LHTPMYYFLTNLSFIDMWFST). The Extracellular segment spans residues 74–98 (VTVPKMLMTLVSPSGRTISFHSCVA). Cys-96 and Cys-188 are disulfide-bonded. The helical transmembrane segment at 99-119 (QLYFFHFLGSTECFLYTVMSY) threads the bilayer. Over 120–138 (DRYLAISYPLRYTNMMTGR) the chain is Cytoplasmic. A helical membrane pass occupies residues 139 to 159 (SCALLATGTWLSGSLHSAVQT). At 160-196 (ILTFHLPYCGPNQIQHYFCDAPPILKLACADTSANEM) the chain is on the extracellular side. Residues 197 to 216 (VIFVNIGLVASGCFVLIVLS) form a helical membrane-spanning segment. Over 217–236 (YVSIVCSILRIRTSEGRHRA) the chain is Cytoplasmic. Residues 237–257 (FQTCASHCIVVLCFFGPGLFI) form a helical membrane-spanning segment. Topologically, residues 258–268 (YLRPGSRDALH) are extracellular. The helical transmembrane segment at 269–289 (GVVAVFYTTLTPLFNPVVYTL) threads the bilayer. Over 290–311 (RNKEVKKALLKLKNGSVFAQGE) the chain is Cytoplasmic.

Belongs to the G-protein coupled receptor 1 family.

The protein resides in the cell membrane. In terms of biological role, odorant receptor. This chain is Olfactory receptor 10G7 (OR10G7), found in Homo sapiens (Human).